The sequence spans 824 residues: Serine/threonine-protein kinase SCH9 (824 aa).

The segment covering 1 to 23 has biased composition (polar residues); sequence MMNFFTSKSSNQDTGFSSQHQHP. Disordered stretches follow at residues 1–37, 125–152, 221–272, and 285–327; these read MMNF…STAG, NAGN…SSTT, ESLG…SQLP, and THRS…SHPI. Residues 24-37 are compositionally biased toward low complexity; the sequence is NGQNNGNNNSSTAG. In terms of domain architecture, C2 spans 166 to 378; it reads QREAAAAAYG…LAHASQHQWH (213 aa). The span at 226 to 248 shows a compositional bias: low complexity; it reads INNNNNNNNNNQHNQNQHINNNN. Composition is skewed to polar residues over residues 249-272 and 286-302; these read ENTN…SQLP and HRSS…SSVT. A compositionally biased stretch (low complexity) spans 307–321; sequence RSSNSSSGSSNGPKN. The 260-residue stretch at 412–671 folds into the Protein kinase domain; that stretch reads FEVLRLLGKG…GRELRAHPFF (260 aa). ATP contacts are provided by residues 418-426 and Lys441; that span reads LGKGTFGQV. Catalysis depends on Asp538, which acts as the Proton acceptor. Position 570 is a phosphothreonine; by PKH1 or PKH2 (Thr570). The 77-residue stretch at 672 to 748 folds into the AGC-kinase C-terminal domain; the sequence is ADIDWEALKQ…VDESAIDEHV (77 aa). Residue Ser711 is modified to Phosphoserine; by TORC1. Thr723 carries the post-translational modification Phosphothreonine; by TORC1. Ser726 carries the phosphoserine; by TORC1 modification. Position 737 is a phosphothreonine; by TORC1 (Thr737). A phosphoserine; by TORC1 mark is found at Ser758 and Ser765.

It belongs to the protein kinase superfamily. AGC Ser/Thr protein kinase family. cAMP subfamily. In terms of processing, phosphorylated by TORC1 in nutrient-replete conditions and during mechanical stress.

It catalyses the reaction L-seryl-[protein] + ATP = O-phospho-L-seryl-[protein] + ADP + H(+). The enzyme catalyses L-threonyl-[protein] + ATP = O-phospho-L-threonyl-[protein] + ADP + H(+). Activated by cAMP. In terms of biological role, protein kinase that is part of growth control pathway which is at least partially redundant with the cAMP pathway. Regulates both BCY1 phosphorylation and MPK1 activity. Regulates ribosome biogenesis, translation initiation, and entry into stationary phase in a TORC1-dependent manner. In Saccharomyces cerevisiae (strain ATCC 204508 / S288c) (Baker's yeast), this protein is Serine/threonine-protein kinase SCH9 (SCH9).